The chain runs to 452 residues: Bone morphogenetic protein 5 (452 aa).

A signal peptide spans 1–25 (MHWTVFLLRGIVGFLWSGWVQVGYA). Positions 26–314 (KGGLGDNHVH…ASEVLLRSVR (289 aa)) are excised as a propeptide. 4 N-linked (GlcNAc...) asparagine glycosylation sites follow: asparagine 209, asparagine 325, asparagine 343, and asparagine 393. The interval 316 to 345 (ASKRKNQNRNKSNSHQDPSRMPSAGDYNTS) is disordered. 3 disulfides stabilise this stretch: cysteine 351-cysteine 417, cysteine 380-cysteine 449, and cysteine 384-cysteine 451.

The protein belongs to the TGF-beta family. Interacts with ERFE; the interaction inhibits BMP-induced transcription of HAMP.

The protein localises to the secreted. In terms of biological role, growth factor of the TGF-beta superfamily that plays essential roles in many developmental processes, including cartilage and bone formation or neurogenesis. Initiates the canonical BMP signaling cascade by associating with type I receptor BMPR1A and type II receptor BMPR2. In turn, BMPR1A propagates signal by phosphorylating SMAD1/5/8 that travel to the nucleus and act as activators and repressors of transcription of target genes. Can also signal through non-canonical pathway such as MAPK p38 signaling cascade to promote chondrogenic differentiation. Promotes the expression of HAMP, this is repressed by its interaction with ERFE. The chain is Bone morphogenetic protein 5 (Bmp5) from Mus musculus (Mouse).